We begin with the raw amino-acid sequence, 134 residues long: Small ribosomal subunit protein uS8c (134 aa).

Belongs to the universal ribosomal protein uS8 family. In terms of assembly, part of the 30S ribosomal subunit.

The protein localises to the plastid. Its subcellular location is the chloroplast. Functionally, one of the primary rRNA binding proteins, it binds directly to 16S rRNA central domain where it helps coordinate assembly of the platform of the 30S subunit. The sequence is that of Small ribosomal subunit protein uS8c (rps8) from Panax ginseng (Korean ginseng).